The sequence spans 523 residues: Cytochrome P450 monooxygenase bsc5 (523 aa).

Residues 16–36 (MQLHWTVLGLLPVLFIAILGP) form a helical membrane-spanning segment. N-linked (GlcNAc...) asparagine glycans are attached at residues N178, N281, and N403. C459 lines the heme pocket.

It belongs to the cytochrome P450 family. Heme serves as cofactor.

The protein localises to the membrane. It participates in mycotoxin biosynthesis. Its function is as follows. Cytochrome P450 monooxygenase; part of the gene cluster that mediates the biosynthesis of the diterpene glucoside brassicicene C. In the first step of the brassicicene C biosynthesis, the bifunctional diterpene synthase bsc8 that possesses both prenyl transferase and terpene cyclase activity, converts isopentenyl diphosphate and dimethylallyl diphosphate into geranylgeranyl diphosphate (GGDP) that is further converted into fusicocca-2,10(14)-diene, the first precursor for brassicicene C. Fusicocca-2,10(14)-diene is then substrate of cytochrome P450 monooxygenase bsc1 for hydroxylation at the C-8 position. Oxidation at C-16 position to aldehyde is then catalyzed by the cytochrome P450 monooyxygenase bsc7, yielding fusicocca-2,10(14)-diene-8-beta,16-diol. Follows the isomerization of the double bond and reduction of aldehyde to alcohol catalyzed by the short-chain dehydrogenase/reductase bsc3 to yield the diol compound fusicocca-1,10(14)-diene-8 beta,16-diol. The next step is the oxidation at the C-3 position of fusicocca-2,10(14)-diene-8-beta,16-diol catalyzed by the alpha-ketoglutarate dependent dioxygenase bsc9, to produce a triol compound. Methylation of the hydroxy group at position 16 is performed by the methyltransferase bsc6. 16-O-methylation is followed by oxidation at the C-13 position to ketone and an alkyl shift of the methyl group leads to brassicicene C. Although the probable acetyltransferase bsc4 is included in the gene cluster, no acetylation reactions are necessary for brassicicene C biosynthesis. However, the fact that brassicicene E, which is a structurally related compound having an acetoxy group at position 12, was previously isolated from another strain of A.brassicicola suggests that the ATCC 96836 strain might also produce a small amount of brassicicene E. This Alternaria brassicicola (Dark leaf spot agent) protein is Cytochrome P450 monooxygenase bsc5.